Here is a 383-residue protein sequence, read N- to C-terminus: Dephospho-CoA kinase (383 aa).

The DPCK domain occupies 3–201 (RIGLTGGMGA…RRLVPFERNL (199 aa)). 11–16 (GAGKST) provides a ligand contact to ATP. Positions 196-383 (PFERNLRAAT…EVAERLLGTV (188 aa)) are UPF0157.

The protein in the N-terminal section; belongs to the CoaE family. This sequence in the C-terminal section; belongs to the UPF0157 (GrpB) family.

Its subcellular location is the cytoplasm. It catalyses the reaction 3'-dephospho-CoA + ATP = ADP + CoA + H(+). Its pathway is cofactor biosynthesis; coenzyme A biosynthesis; CoA from (R)-pantothenate: step 5/5. Catalyzes the phosphorylation of the 3'-hydroxyl group of dephosphocoenzyme A to form coenzyme A. The sequence is that of Dephospho-CoA kinase from Nocardia farcinica (strain IFM 10152).